The sequence spans 470 residues: Uronate isomerase (470 aa).

It belongs to the metallo-dependent hydrolases superfamily. Uronate isomerase family.

It catalyses the reaction D-glucuronate = D-fructuronate. It carries out the reaction aldehydo-D-galacturonate = keto-D-tagaturonate. Its pathway is carbohydrate metabolism; pentose and glucuronate interconversion. This chain is Uronate isomerase, found in Salmonella arizonae (strain ATCC BAA-731 / CDC346-86 / RSK2980).